A 398-amino-acid polypeptide reads, in one-letter code: Abhydrolase domain-containing protein 2 (398 aa).

Topologically, residues 1–4 (MSTA) are cytoplasmic. A helical; Signal-anchor for type II membrane protein membrane pass occupies residues 5–22 (FLTLIAVIVCILFRILNV). Topologically, residues 23 to 398 (HSQPLKPSVW…MMHEVGKVAP (376 aa)) are extracellular. An AB hydrolase-1 domain is found at 113-365 (VAICPGIANS…HGGHLGFYEG (253 aa)). Catalysis depends on charge relay system residues S192, D328, and H359.

Belongs to the AB hydrolase superfamily. AB hydrolase 4 family.

Its subcellular location is the membrane. This chain is Abhydrolase domain-containing protein 2 (Hydr2), found in Drosophila melanogaster (Fruit fly).